The following is a 330-amino-acid chain: Glycerol-3-phosphate dehydrogenase [NAD(P)+] (330 aa).

NADPH contacts are provided by Trp-11, Arg-33, and Lys-105. Positions 105, 133, and 135 each coordinate sn-glycerol 3-phosphate. Ala-137 is a binding site for NADPH. Lys-188, Asp-241, Ser-251, Arg-252, and Asn-253 together coordinate sn-glycerol 3-phosphate. Lys-188 acts as the Proton acceptor in catalysis. Arg-252 provides a ligand contact to NADPH. Residues Val-276 and Glu-278 each contribute to the NADPH site.

Belongs to the NAD-dependent glycerol-3-phosphate dehydrogenase family.

The protein resides in the cytoplasm. It catalyses the reaction sn-glycerol 3-phosphate + NAD(+) = dihydroxyacetone phosphate + NADH + H(+). It carries out the reaction sn-glycerol 3-phosphate + NADP(+) = dihydroxyacetone phosphate + NADPH + H(+). It participates in membrane lipid metabolism; glycerophospholipid metabolism. In terms of biological role, catalyzes the reduction of the glycolytic intermediate dihydroxyacetone phosphate (DHAP) to sn-glycerol 3-phosphate (G3P), the key precursor for phospholipid synthesis. The protein is Glycerol-3-phosphate dehydrogenase [NAD(P)+] of Acidovorax sp. (strain JS42).